The following is a 456-amino-acid chain: GTPase Der (456 aa).

2 consecutive EngA-type G domains span residues 3–167 (FTIA…PETE) and 185–360 (IRVA…AVWN). GTP is bound by residues 9–16 (GRPNVGKS), 56–60 (DTAGL), 119–122 (NKSE), 191–198 (GRPNAGKS), 238–242 (DTAGL), and 303–306 (NKWD). A KH-like domain is found at 361 to 445 (RRVPTAALNR…PVRITLREKA (85 aa)).

This sequence belongs to the TRAFAC class TrmE-Era-EngA-EngB-Septin-like GTPase superfamily. EngA (Der) GTPase family. Associates with the 50S ribosomal subunit.

GTPase that plays an essential role in the late steps of ribosome biogenesis. The protein is GTPase Der of Bradyrhizobium sp. (strain BTAi1 / ATCC BAA-1182).